Here is a 240-residue protein sequence, read N- to C-terminus: DNA repair protein RecO (240 aa).

This sequence belongs to the RecO family.

Functionally, involved in DNA repair and RecF pathway recombination. This is DNA repair protein RecO from Xanthomonas euvesicatoria pv. vesicatoria (strain 85-10) (Xanthomonas campestris pv. vesicatoria).